Here is a 590-residue protein sequence, read N- to C-terminus: MKRTNYAGNITEEYLNQTITVKGWVAKRRNLGGLIFIDLRDREGIVQIVVNPETAATEVAEAADKARNEFVLEVTGKVVERASKNDKIKTGGIEIEATAIEILSTSKTTPFEIKDDVEVLDDTRLKYRYLDLRRPEMLKNITMRHATTRSIREYLDGAGFIDVETPFLNKSTPEGARDYLVPSRVNKGEFYALPQSPQLMKQLLMTAGLDRYYQIVKCFRDEDLRGDRQPEFTQVDLETSFLGEEEIQELTEELIAKVMKDVKGIDVTLPFPRMNYDDAMNFYGSDKPDTRFELLLTDLSALAKTVDFKVFQEAEVVKAIVVKGAADKYSRKSIDKLTEQAKQNGAKGLAWVKFEKGEFAGGISKFLAESTDSFVNELKLTDNDLVLFVADSLDVANSALGALRLTIGKQQGLIDFRKFNFLWVIDWPMFEWSDEEERYMSAHHPFTLPTKETQAFLSADGHRKDSDLKKVRAHAYDIVLNGYELGGGSLRINSRDLQEEMLSALGFKLEDANEQFGFLLEALDYGFPPHGGLALGLDRFVMLLAGKDNIREVIAFPKNNKASDPMTQAPSIVADKQLEELSIKLANKDQ.

Residue glutamate 174 participates in L-aspartate binding. The tract at residues 198-201 (QLMK) is aspartate. Arginine 220 lines the L-aspartate pocket. ATP contacts are provided by residues 220 to 222 (RDE) and glutamine 229. Histidine 443 is a binding site for L-aspartate. Glutamate 484 contributes to the ATP binding site. Arginine 491 contributes to the L-aspartate binding site. Residue 536-539 (GLDR) participates in ATP binding.

Belongs to the class-II aminoacyl-tRNA synthetase family. Type 1 subfamily. Homodimer.

It is found in the cytoplasm. It carries out the reaction tRNA(Asp) + L-aspartate + ATP = L-aspartyl-tRNA(Asp) + AMP + diphosphate. In terms of biological role, catalyzes the attachment of L-aspartate to tRNA(Asp) in a two-step reaction: L-aspartate is first activated by ATP to form Asp-AMP and then transferred to the acceptor end of tRNA(Asp). This Lactococcus lactis subsp. cremoris (strain SK11) protein is Aspartate--tRNA ligase.